Consider the following 203-residue polypeptide: Urease accessory protein UreG (203 aa).

14-21 (GPVGSGKT) serves as a coordination point for GTP.

The protein belongs to the SIMIBI class G3E GTPase family. UreG subfamily. As to quaternary structure, homodimer. UreD, UreF and UreG form a complex that acts as a GTP-hydrolysis-dependent molecular chaperone, activating the urease apoprotein by helping to assemble the nickel containing metallocenter of UreC. The UreE protein probably delivers the nickel.

The protein localises to the cytoplasm. Functionally, facilitates the functional incorporation of the urease nickel metallocenter. This process requires GTP hydrolysis, probably effectuated by UreG. The sequence is that of Urease accessory protein UreG from Sinorhizobium medicae (strain WSM419) (Ensifer medicae).